A 133-amino-acid polypeptide reads, in one-letter code: Small ribosomal subunit protein uS8 (133 aa).

The protein belongs to the universal ribosomal protein uS8 family. Part of the 30S ribosomal subunit. Contacts proteins S5 and S12.

Its function is as follows. One of the primary rRNA binding proteins, it binds directly to 16S rRNA central domain where it helps coordinate assembly of the platform of the 30S subunit. The sequence is that of Small ribosomal subunit protein uS8 from Chlamydia pneumoniae (Chlamydophila pneumoniae).